We begin with the raw amino-acid sequence, 299 residues long: MTKVRKAIIPAAGLGTRFLPATKALAKEMLPIVDKPTIQFIVEEALKSGIEEILIVTGKSKRSIEDHFDSNFELEYNLQAKGKIELLKLVDETTSINLHFIRQSHPRGLGDAVLQAKTFVGNEPFVVMLGDDLMDITNPNVKPLTKQLIDDYEETHAATIAVMRVPHEDVSNYGIIAPQAKAVKGLYSVDTFVEKPQPQDAPSDLAIIGRYLLTPEIFSILEKQEPGAGNEVQLTDAIDTLNKTQRVFAREFKGKRYDVGDKFGFMKTSLDYALKHPQVKDDLKAYIIQLGKALEKTKP.

The protein belongs to the UDPGP type 2 family.

The catalysed reaction is alpha-D-glucose 1-phosphate + UTP + H(+) = UDP-alpha-D-glucose + diphosphate. It functions in the pathway carbohydrate metabolism; nucleotide-sugar metabolism. This Streptococcus pyogenes serotype M6 (strain ATCC BAA-946 / MGAS10394) protein is UTP--glucose-1-phosphate uridylyltransferase 1 (hasC1).